A 314-amino-acid chain; its full sequence is Ribonucleoside-diphosphate reductase small subunit (314 aa).

Fe cation-binding residues include D73, E103, and H106. Y110 is a catalytic residue. Residues 160–180 form a helical membrane-spanning segment; that stretch reads VLMILIEGIFFSSSFAAIAYL. Residues E166, E200, and H203 each coordinate Fe cation.

Belongs to the ribonucleoside diphosphate reductase small chain family. As to quaternary structure, heterotetramer composed of a homodimer of the large subunit (R1) and a homodimer of the small subunit (R2). Larger multisubunit protein complex are also active, composed of (R1)n(R2)n. Fe cation serves as cofactor.

The protein localises to the host membrane. It carries out the reaction a 2'-deoxyribonucleoside 5'-diphosphate + [thioredoxin]-disulfide + H2O = a ribonucleoside 5'-diphosphate + [thioredoxin]-dithiol. Its function is as follows. Ribonucleoside-diphosphate reductase holoenzyme provides the precursors necessary for viral DNA synthesis. Allows virus growth in non-dividing cells, as well as reactivation from latency in infected hosts. Catalyzes the biosynthesis of deoxyribonucleotides from the corresponding ribonucleotides. In Bovine herpesvirus 1.1 (strain Cooper) (BoHV-1), this protein is Ribonucleoside-diphosphate reductase small subunit.